We begin with the raw amino-acid sequence, 496 residues long: Glycerol kinase (496 aa).

ADP is bound at residue threonine 12. Threonine 12, threonine 13, and serine 14 together coordinate ATP. Residue threonine 12 coordinates sn-glycerol 3-phosphate. Arginine 16 lines the ADP pocket. The sn-glycerol 3-phosphate site is built by arginine 82, glutamate 83, and tyrosine 134. Glycerol contacts are provided by arginine 82, glutamate 83, and tyrosine 134. Phosphohistidine; by HPr is present on histidine 230. Aspartate 244 lines the sn-glycerol 3-phosphate pocket. Positions 244 and 245 each coordinate glycerol. 2 residues coordinate ADP: threonine 266 and glycine 309. Residues threonine 266, glycine 309, glutamine 313, and glycine 410 each contribute to the ATP site. ADP contacts are provided by glycine 410 and asparagine 414.

The protein belongs to the FGGY kinase family. As to quaternary structure, homotetramer and homodimer (in equilibrium). The phosphoenolpyruvate-dependent sugar phosphotransferase system (PTS), including enzyme I, and histidine-containing protein (HPr) are required for the phosphorylation, which leads to the activation of the enzyme.

The catalysed reaction is glycerol + ATP = sn-glycerol 3-phosphate + ADP + H(+). Its pathway is polyol metabolism; glycerol degradation via glycerol kinase pathway; sn-glycerol 3-phosphate from glycerol: step 1/1. Its activity is regulated as follows. Activated by phosphorylation and inhibited by fructose 1,6-bisphosphate (FBP). Its function is as follows. Key enzyme in the regulation of glycerol uptake and metabolism. Catalyzes the phosphorylation of glycerol to yield sn-glycerol 3-phosphate. The protein is Glycerol kinase of Bacillus cereus (strain ATCC 14579 / DSM 31 / CCUG 7414 / JCM 2152 / NBRC 15305 / NCIMB 9373 / NCTC 2599 / NRRL B-3711).